The primary structure comprises 397 residues: Cephalotocin receptor 1 (397 aa).

Residues 1-48 are Extracellular-facing; it reads MRYITTHPNEISTQIWNNFSSTEIWSNFSAAKNETQPIRRNQDLANAE. Residues asparagine 18, asparagine 27, and asparagine 33 are each glycosylated (N-linked (GlcNAc...) asparagine). A helical transmembrane segment spans residues 49–69; the sequence is VITLAVVIIITVIGNSIVLIT. Over 70–91 the chain is Cytoplasmic; that stretch reads LFQRRKKLTRMHLFILHLSVTD. The chain crosses the membrane as a helical span at residues 92–112; that stretch reads LFVAFFNNLPQMIWDITFLFL. Topologically, residues 113–120 are extracellular; that stretch reads GTDLLCRL. Residues cysteine 118 and cysteine 194 are joined by a disulfide bond. A helical transmembrane segment spans residues 121 to 141; the sequence is VTYLQSVAMYASSYVLVATAI. The Cytoplasmic segment spans residues 142–162; it reads DRYFAICHPLSSHKWTTARVH. Residues 163-183 traverse the membrane as a helical segment; that stretch reads VMVFIAWMLSFLFSTPQLFIW. Residues 184 to 205 lie on the Extracellular side of the membrane; sequence SMQFSNIGLTCQATFDPEWTLK. A helical transmembrane segment spans residues 206–226; the sequence is FYITWLTVAIWILPTIALTLF. Over 227–293 the chain is Cytoplasmic; the sequence is YGMMCFAVWK…RGISRAKVRS (67 aa). A helical transmembrane segment spans residues 294–314; that stretch reads VALTLSVVACCFICWSPFFVC. Residues 315–331 lie on the Extracellular side of the membrane; it reads QMWAAWDENAPYSGAIY. Residues 332-352 traverse the membrane as a helical segment; that stretch reads TILLLLSSLNSCTNPWIYMIF. Residues 353–397 are Cytoplasmic-facing; sequence SVFQHRAKTSRFVNDEETTSVTVLSSRNDIRLMSMKKKLEQTARN.

It belongs to the G-protein coupled receptor 1 family. Vasopressin/oxytocin receptor subfamily. Present in brain, buccal ganglion, gastric ganglion, olfactory lube, peduncle lobe, optical lobe, pancreas, the oviduct and the ovary.

The protein resides in the cell membrane. Its function is as follows. Acts as a receptor for cephalotocin. This is Cephalotocin receptor 1 from Octopus vulgaris (Common octopus).